Here is a 379-residue protein sequence, read N- to C-terminus: Chaperone protein DnaJ (379 aa).

One can recognise a J domain in the interval 5–69; the sequence is EYYERLGVDK…QKRAAYDQYG (65 aa). The CR-type zinc finger occupies 141–223; the sequence is GVEKQVKYNR…CHGSGHEKVA (83 aa). Zn(2+) is bound by residues C154, C157, C171, C174, C197, C200, C211, and C214. 4 CXXCXGXG motif repeats span residues 154 to 161, 171 to 178, 197 to 204, and 211 to 218; these read CHTCGGSG, CHKCGGRG, CDVCHGTG, and CTTCHGSG.

This sequence belongs to the DnaJ family. As to quaternary structure, homodimer. It depends on Zn(2+) as a cofactor.

The protein localises to the cytoplasm. Functionally, participates actively in the response to hyperosmotic and heat shock by preventing the aggregation of stress-denatured proteins and by disaggregating proteins, also in an autonomous, DnaK-independent fashion. Unfolded proteins bind initially to DnaJ; upon interaction with the DnaJ-bound protein, DnaK hydrolyzes its bound ATP, resulting in the formation of a stable complex. GrpE releases ADP from DnaK; ATP binding to DnaK triggers the release of the substrate protein, thus completing the reaction cycle. Several rounds of ATP-dependent interactions between DnaJ, DnaK and GrpE are required for fully efficient folding. Also involved, together with DnaK and GrpE, in the DNA replication of plasmids through activation of initiation proteins. This is Chaperone protein DnaJ from Lactococcus lactis subsp. cremoris (strain MG1363).